A 1492-amino-acid chain; its full sequence is Collagen alpha-1(II) chain (1492 aa).

Residues 1-26 form the signal peptide; the sequence is MFSFVDSRTLVLFAATQVILLAVVRC. Residues 27–186 constitute a propeptide, N-terminal propeptide; it reads QDEEDVLATG…PPGLGGNFAA (160 aa). The 59-residue stretch at 36–94 folds into the VWFC domain; the sequence is GSCVQHGQRYSDKDVWKPEPCQICVCDTGNVLCDEIICEDPKDCPNAEIPFGECCPICP. The disordered stretch occupies residues 98–1255; the sequence is SSTSSGQGVL…ADQASSSVPQ (1158 aa). 2 stretches are compositionally biased toward basic and acidic residues: residues 110–121 and 138–159; these read QKGEPGDIKDVV and PRGD…RDGE. The span at 163–178 shows a compositional bias: pro residues; sequence PGNPGPVGPPGPPGPP. The segment covering 197–208 has biased composition (low complexity); it reads GGAQMGVMQGPM. A triple-helical region region spans residues 206–1219; sequence GPMGPMGPRG…PGPPGPPGPP (1014 aa). Pro residues predominate over residues 213 to 222; it reads PRGPPGPTGA. A compositionally biased stretch (low complexity) spans 223–234; that stretch reads PGPQGFQGNPGE. The span at 236–245 shows a compositional bias: gly residues; that stretch reads GEPGAGGPMG. Positions 256–270 are enriched in basic and acidic residues; sequence PGDDGEAGKPGKSGE. The segment covering 311–320 has biased composition (gly residues); sequence GAKGEGGATG. Low complexity-rich tracts occupy residues 321–333, 340–355, 366–376, and 396–436; these read EAGS…PRGL, PGAS…DGLP, PAGAPGFPGAP, and PRGE…AGAP. Positions 438 to 447 are enriched in pro residues; that stretch reads FPGPRGPPGP. Composition is skewed to low complexity over residues 480 to 490 and 501 to 517; these read SAGPQGAPGPA and EPGA…RGAP. A compositionally biased stretch (gly residues) spans 539 to 548; it reads GVPGLGGPKG. Composition is skewed to low complexity over residues 627-636 and 645-655; these read LLGAPGLRGL and AQGPNGPAGPA. Residues P664 and P673 each carry the 4-hydroxyproline modification. P675 carries the 3-hydroxyproline modification. 2 positions are modified to 4-hydroxyproline: P676 and P679. Positions 711–741 are enriched in low complexity; that stretch reads ERGSSGPQGLQGPRGLPGTPGTDGPKGATGP. The span at 769–780 shows a compositional bias: basic and acidic residues; the sequence is KGDRGDTGEKGP. Composition is skewed to low complexity over residues 838–850 and 894–910; these read AGFA…DGQA and AQGP…AGRV. P912 bears the 3-hydroxyproline mark. 4-hydroxyproline is present on residues P913, P919, and P925. Residues 919-930 are compositionally biased toward low complexity; sequence PGPSGAPGSAGK. Positions 1010–1019 are enriched in gly residues; the sequence is GKQGGPGSAG. Low complexity predominate over residues 1105–1114; the sequence is SGPAGARGLP. Residues 1120 to 1134 show a composition bias toward basic and acidic residues; the sequence is RGDKGEAGEAGERGQ. 2 stretches are compositionally biased toward low complexity: residues 1140–1159 and 1176–1186; these read FTGL…QGAS and PSGKDGSNGLP. 3-hydroxyproline is present on P1149. A 4-hydroxyproline modification is found at P1186. A 3-hydroxyproline modification is found at P1191. At P1192 the chain carries 4-hydroxyproline. Over residues 1204–1221 the composition is skewed to pro residues; the sequence is AGPPGQPGPPGPPGPPGP. At P1206 the chain carries 3-hydroxyproline. P1207 and P1210 each carry 4-hydroxyproline. A 3-hydroxyproline modification is found at P1212. Residues P1213 and P1216 each carry the 4-hydroxyproline modification. P1218 carries the post-translational modification 3-hydroxyproline. Position 1219 is a 4-hydroxyproline (P1219). A nonhelical region (C-terminal) region spans residues 1220–1246; the sequence is GPGIDMSAFAGLSQPEKGPDPMRYMRA. Basic and acidic residues predominate over residues 1236–1245; sequence KGPDPMRYMR. Residues 1247–1492 constitute a propeptide, C-terminal propeptide; that stretch reads DQASSSVPQR…GVDIGPVCFL (246 aa). Positions 1258-1492 constitute a Fibrillar collagen NC1 domain; sequence VDVEATLKSL…GVDIGPVCFL (235 aa). Cystine bridges form between C1288–C1320, C1328–C1490, and C1398–C1443. 5 residues coordinate Ca(2+): D1306, N1308, Q1309, C1311, and D1314. N1393 is a glycosylation site (N-linked (GlcNAc...) asparagine).

The protein belongs to the fibrillar collagen family. As to quaternary structure, homotrimers of alpha 1(II) chains. Post-translationally, contains mostly 4-hydroxyproline. Prolines at the third position of the tripeptide repeating unit (G-X-P) are 4-hydroxylated in some or all of the chains. In terms of processing, contains 3-hydroxyproline at a few sites. This modification occurs on the first proline residue in the sequence motif Gly-Pro-Hyp, where Hyp is 4-hydroxyproline. Lysine residues at the third position of the tripeptide repeating unit (G-X-Y) are 5-hydroxylated in some or all of the chains. Post-translationally, O-glycosylated on hydroxylated lysine residues. The O-linked glycan consists of a Glc-Gal disaccharide.

The protein resides in the secreted. Its subcellular location is the extracellular space. It localises to the extracellular matrix. Functionally, type II collagen is specific for cartilaginous tissues. It is essential for the normal embryonic development of the skeleton, for linear growth and for the ability of cartilage to resist compressive forces. In Xenopus tropicalis (Western clawed frog), this protein is Collagen alpha-1(II) chain.